The primary structure comprises 230 residues: uncharacterized protein (230 aa).

This is an uncharacterized protein from Acanthamoeba polyphaga (Amoeba).